A 324-amino-acid chain; its full sequence is Chlorophyllase-1 (324 aa).

The GXSXG motif lies at 136 to 140 (GHSRG). Ser-138 serves as the catalytic Nucleophile. Residues Asp-168 and His-243 each act as charge relay system in the active site.

Belongs to the AB hydrolase superfamily. Lipase family. Expressed in seedlings, leaves, flowers and siliques, but not in roots.

It localises to the cytoplasm. The protein localises to the cytosol. The catalysed reaction is a chlorophyll + H2O = a chlorophyllide + phytol + H(+). The enzyme catalyses chlorophyll a + H2O = phytol + chlorophyllide a + H(+). It participates in porphyrin-containing compound metabolism; chlorophyll degradation. Catalyzes the hydrolysis of ester bond in chlorophyll to yield chlorophyllide and phytol. Shows a preferential activity toward chlorophyll a. Does not seem to be required for chlorophyll degradation during senescence. May modulate the balance between different plant defense pathways. This is Chlorophyllase-1 from Arabidopsis thaliana (Mouse-ear cress).